The sequence spans 320 residues: Malate dehydrogenase (320 aa).

NAD(+) contacts are provided by residues 10-15 (GAGQIG) and D34. The substrate site is built by R83 and R89. NAD(+)-binding positions include N96 and 119–121 (ITN). Residues N121 and R152 each contribute to the substrate site. H176 serves as the catalytic Proton acceptor.

The protein belongs to the LDH/MDH superfamily. MDH type 3 family.

The enzyme catalyses (S)-malate + NAD(+) = oxaloacetate + NADH + H(+). Catalyzes the reversible oxidation of malate to oxaloacetate. This is Malate dehydrogenase from Dinoroseobacter shibae (strain DSM 16493 / NCIMB 14021 / DFL 12).